Reading from the N-terminus, the 537-residue chain is uncharacterized protein (537 aa).

The N-terminal stretch at 1–15 (MALFQLFSFLNVTLG) is a signal peptide. Transmembrane regions (helical) follow at residues 459–479 (VLFS…GCCF) and 490–510 (VILL…LGFT).

It localises to the host membrane. This is an uncharacterized protein from Citrus sinensis (Sweet orange).